The primary structure comprises 282 residues: Large ribosomal subunit protein uL4c (282 aa).

Residues 1 to 43 constitute a chloroplast transit peptide; that stretch reads MAASLSFFSSSIFLSNPNIQSSKHLLFRSPKQLSVAAIATIRS. Disordered regions lie at residues 86 to 133 and 251 to 282; these read RNQR…GGVV and RYGD…ESSE. Acidic residues predominate over residues 255–282; the sequence is ENEWEDEEEDDQEDNDGGEAEESTESSE.

This sequence belongs to the universal ribosomal protein uL4 family. As to quaternary structure, part of the 50S ribosomal subunit.

Its subcellular location is the plastid. It is found in the chloroplast. Functionally, this protein binds directly and specifically to 23S rRNA. May play a role in plastid transcriptional regulation. This chain is Large ribosomal subunit protein uL4c (RPL4), found in Nicotiana tabacum (Common tobacco).